Here is a 93-residue protein sequence, read N- to C-terminus: Sec-independent protein translocase protein TatA (93 aa).

A helical membrane pass occupies residues 1-21 (MGNVFSGWHLLVILLVIVLLF). A disordered region spans residues 49-93 (DITRSQDGHPDSQGNFAESASSVPFVKSEKQSEKRASVTEAKKSK). Residues 60–70 (SQGNFAESASS) are compositionally biased toward polar residues. Over residues 75–93 (KSEKQSEKRASVTEAKKSK) the composition is skewed to basic and acidic residues.

It belongs to the TatA/E family. The Tat system comprises two distinct complexes: a TatABC complex, containing multiple copies of TatA, TatB and TatC subunits, and a separate TatA complex, containing only TatA subunits. Substrates initially bind to the TatABC complex, which probably triggers association of the separate TatA complex to form the active translocon.

The protein localises to the cell membrane. In terms of biological role, part of the twin-arginine translocation (Tat) system that transports large folded proteins containing a characteristic twin-arginine motif in their signal peptide across membranes. TatA could form the protein-conducting channel of the Tat system. This Tropheryma whipplei (strain TW08/27) (Whipple's bacillus) protein is Sec-independent protein translocase protein TatA.